Here is a 229-residue protein sequence, read N- to C-terminus: Large ribosomal subunit protein uL1 (229 aa).

The protein belongs to the universal ribosomal protein uL1 family. In terms of assembly, part of the 50S ribosomal subunit.

Its function is as follows. Binds directly to 23S rRNA. The L1 stalk is quite mobile in the ribosome, and is involved in E site tRNA release. Protein L1 is also a translational repressor protein, it controls the translation of the L11 operon by binding to its mRNA. This Flavobacterium johnsoniae (strain ATCC 17061 / DSM 2064 / JCM 8514 / BCRC 14874 / CCUG 350202 / NBRC 14942 / NCIMB 11054 / UW101) (Cytophaga johnsonae) protein is Large ribosomal subunit protein uL1.